A 247-amino-acid chain; its full sequence is Myeloid leukemia factor 2 (247 aa).

Residues 122–247 (ETSEMRSAPG…PSRQSRRYDW (126 aa)) form a disordered region. Residues 134–144 (RETRRTVRDSD) are compositionally biased toward basic and acidic residues. Residues 154–169 (HHIRDRAHILQRSRNH) are compositionally biased toward basic residues. Residues 170–179 (RTGDQEERQD) show a composition bias toward basic and acidic residues. The span at 182–192 (NLDESEAAAFD) shows a compositional bias: acidic residues. Over residues 193 to 225 (DEWRRETSRYRQQRPLEFRRHEASVGGGRRAEG) the composition is skewed to basic and acidic residues. Ser-216, Ser-237, and Ser-239 each carry phosphoserine.

The protein belongs to the MLF family.

Its subcellular location is the cytoplasm. It is found in the nucleus. This Mus musculus (Mouse) protein is Myeloid leukemia factor 2 (Mlf2).